The chain runs to 380 residues: Deoxyguanosinetriphosphate triphosphohydrolase-like protein (380 aa).

A disordered region spans residues 1–28 (MYAPYATMPDRSRGRAVPEEESSFRSPF). One can recognise an HD domain in the interval 62 to 198 (RLTHSIEVGQ…AALADDIAYN (137 aa)).

It belongs to the dGTPase family. Type 2 subfamily.

The chain is Deoxyguanosinetriphosphate triphosphohydrolase-like protein from Ruegeria sp. (strain TM1040) (Silicibacter sp.).